The following is a 357-amino-acid chain: DNA replication and repair protein RecF (357 aa).

Position 30–37 (30–37) interacts with ATP; the sequence is GANGSGKT.

It belongs to the RecF family.

It is found in the cytoplasm. In terms of biological role, the RecF protein is involved in DNA metabolism; it is required for DNA replication and normal SOS inducibility. RecF binds preferentially to single-stranded, linear DNA. It also seems to bind ATP. The polypeptide is DNA replication and repair protein RecF (Shigella dysenteriae serotype 1 (strain Sd197)).